A 423-amino-acid chain; its full sequence is Serine--tRNA ligase (423 aa).

230–232 contacts L-serine; sequence TAE. 261-263 is an ATP binding site; the sequence is RSE. Glu-284 lines the L-serine pocket. Residue 348–351 participates in ATP binding; sequence EISS. Ser-383 lines the L-serine pocket.

This sequence belongs to the class-II aminoacyl-tRNA synthetase family. Type-1 seryl-tRNA synthetase subfamily. As to quaternary structure, homodimer. The tRNA molecule binds across the dimer.

Its subcellular location is the cytoplasm. The enzyme catalyses tRNA(Ser) + L-serine + ATP = L-seryl-tRNA(Ser) + AMP + diphosphate + H(+). It catalyses the reaction tRNA(Sec) + L-serine + ATP = L-seryl-tRNA(Sec) + AMP + diphosphate + H(+). The protein operates within aminoacyl-tRNA biosynthesis; selenocysteinyl-tRNA(Sec) biosynthesis; L-seryl-tRNA(Sec) from L-serine and tRNA(Sec): step 1/1. Its function is as follows. Catalyzes the attachment of serine to tRNA(Ser). Is also able to aminoacylate tRNA(Sec) with serine, to form the misacylated tRNA L-seryl-tRNA(Sec), which will be further converted into selenocysteinyl-tRNA(Sec). In Levilactobacillus brevis (strain ATCC 367 / BCRC 12310 / CIP 105137 / JCM 1170 / LMG 11437 / NCIMB 947 / NCTC 947) (Lactobacillus brevis), this protein is Serine--tRNA ligase.